The sequence spans 237 residues: MEFEPALIEVTLLRRYKRFLADVRTPDGREFTAHCPNTGSMMGCMEPGSRVWLSHSPDPKRKYAHTWQLVEAEGALVGINTGLSNRLVEEAIGSGLIAELAGWPGLRREVRYGDQGSRIDLLLEDGERRCYVEVKNVTAAVSEGVAIFPDAVSARGSKHLEELMLMVREGHQAALVFCVQRGDVHTVRPADAIDPLYGQRLREAAQAGVRVLACGARVWPGGVVLERVLDVDLSRAG.

Belongs to the SfsA family.

The chain is Sugar fermentation stimulation protein homolog from Thioalkalivibrio sulfidiphilus (strain HL-EbGR7).